The chain runs to 312 residues: MTFSNNFHRLETRLQSQAGRAIGDFKMIEDGDTVLVCLSGGKDSYTMLSVLMALQKRAPIDFKLIAMNLDQKQPGFPEDVLPGYLKKVGVEYVIVEADTYSIVKEKVPEGKTTCSLCSRLRRGVIYRTAKELGANKIALGHHRDDIVNTFFLNMFFGGKMKAMPPKLATDNGDHIVIRPLAYCAEKEIAAYARAMEFPIIPCNLCGSQENLQRKKVKEMLLEWERQAPGRIDNIFSALQNVVPSHLADTDLFDFNGLTTGLAKIGEEALFGQTAYDQAPLVFAGSHDDRIEFVRFERNPAGKAPEGAEQPAA.

The PP-loop motif signature appears at 39-44 (SGGKDS). The [4Fe-4S] cluster site is built by Cys-114, Cys-117, and Cys-205.

This sequence belongs to the TtcA family. In terms of assembly, homodimer. It depends on Mg(2+) as a cofactor. [4Fe-4S] cluster serves as cofactor.

The protein resides in the cytoplasm. The catalysed reaction is cytidine(32) in tRNA + S-sulfanyl-L-cysteinyl-[cysteine desulfurase] + AH2 + ATP = 2-thiocytidine(32) in tRNA + L-cysteinyl-[cysteine desulfurase] + A + AMP + diphosphate + H(+). Its pathway is tRNA modification. In terms of biological role, catalyzes the ATP-dependent 2-thiolation of cytidine in position 32 of tRNA, to form 2-thiocytidine (s(2)C32). The sulfur atoms are provided by the cysteine/cysteine desulfurase (IscS) system. This is tRNA-cytidine(32) 2-sulfurtransferase from Ralstonia nicotianae (strain ATCC BAA-1114 / GMI1000) (Ralstonia solanacearum).